Consider the following 481-residue polypeptide: Tetratricopeptide repeat protein 29 (481 aa).

Positions 1-18 (MASVGPVKTKTVTLKELT) are enriched in low complexity. The interval 1 to 53 (MASVGPVKTKTVTLKELTPPIPSPEKSACKGAKPDSNHMALVPVKPSQPGSGK) is disordered. 6 TPR repeats span residues 191–224 (CERCQLLADYFESERDCDEAAWHYDVALRIAMES), 231–264 (QEVRLSFGAFFERHKQLRKAIALFEEVYHLAMAL), 271–310 (VEANYRLIRTYLSLSAELKDTNPKEAISFLERALDMSQRV), 317–350 (ADSLHALGNIYESMGDFRRALEYQKRFFEVARAA), 357–390 (KRASLCVASMQERMNMTDEAVHSLQCALELSEKA), and 397–430 (YRATMQLGQAYDSSGDHEKALMSYRANFGAARKL).

In terms of assembly, interacts with TAX-1.

It is found in the cytoplasm. Its subcellular location is the cytoskeleton. The protein resides in the flagellum axoneme. Axonemal protein which is implicated in axonemal and/or peri-axonemal structure assembly and regulates flagellum assembly and beating. This chain is Tetratricopeptide repeat protein 29, found in Trypanosoma brucei brucei (strain 927/4 GUTat10.1).